Consider the following 156-residue polypeptide: RNA polymerase sigma factor SigS (156 aa).

The Polymerase core binding motif lies at Glu29 to Ile44. The segment at residues Gln126 to Met145 is a DNA-binding region (H-T-H motif).

Belongs to the sigma-70 factor family.

Sigma factors are initiation factors that promote the attachment of RNA polymerase to specific initiation sites and are then released. Sigma-S contributes to the protection against external stress, thus playing a role in cellular fitness and survival. This is RNA polymerase sigma factor SigS (sigS) from Staphylococcus aureus (strain Mu50 / ATCC 700699).